Reading from the N-terminus, the 858-residue chain is MPQKTKNTPMMEQYLSIKAQYKDAFLFYRLGDFYELFYEDAINAAQILELTLTSRNRNADDPIPMCGVPYHAAQGYIDTLIEQGYKVAICEQVEDPKTTKGMVKREVVQLVTPGTVMNSKGLEAKDNNYLTAVLTDGNQFGFAYVDLSTGELKTAVLADEEGVLNEASALQTKEMVLGSGIPESLKENLSLRLNIIFSTQETVEENAEFSFLTNELINPLEIEITGKLLSYLSVTQKRSLSHIQKAVEYQPDHFLKMDHYSKFNLELSQSIRTGQKKGTLLWLLDETKTAMGGRLLKQWLDRPLIQERQIKARQEMVQSLLNAYFERLDLQAALTNVYDLERLAGRVAFGSVNGRDLIQLRTSLEQVPTIRQLIVGINQGEWDDLLVDLNPVEDLVALIATAINEEAPLQITEGKVIKDGYNDQLDEYRDAMRNGKQWLAELEAKERQETGIKNLKIGYNRVFGYFIEITKSNLANLEEGKYERKQTLANAERFITPELKELERLILEAEEKSVELEYQLFLAVREQVKTNIDRLQTLAKTISAVDVLQSFATISERYQYVRPTLRSNTKNLAIVEGRHPVVEKVLGHQEYIPNSIRMNPETDILLITGPNMSGKSTYMRQLALTVVMAQIGCFVPAESAEMPIFDQIFTRIGASDDLIAGQSTFMVEMMEANQALRHATPNSLILFDELGRGTATYDGMALAQAIIEYIHREVQAKTLFSTHYHELTVLDETLKGLKNIHVGAVEKDGEVVFLHKMMEGPADKSYGIHVAKIAGLPSPLLERAATILSALEAEETTIPISVHHEEVSEVHEETEQLSLFKEVSTEELSVIDTLKKMNLLEMTPLDALNMLHQLQKRI.

An ATP-binding site is contributed by 609 to 616 (GPNMSGKS).

The protein belongs to the DNA mismatch repair MutS family.

This protein is involved in the repair of mismatches in DNA. It is possible that it carries out the mismatch recognition step. This protein has a weak ATPase activity. The sequence is that of DNA mismatch repair protein MutS from Enterococcus faecalis (strain ATCC 700802 / V583).